The chain runs to 373 residues: RNA 3'-terminal phosphate cyclase-like protein (373 aa).

The protein belongs to the RNA 3'-terminal cyclase family. Type 2 subfamily. As to quaternary structure, part of the small subunit (SSU) processome, composed of more than 70 proteins and the RNA chaperone small nucleolar RNA (snoRNA) U3. Interacts with BMS1.

It localises to the nucleus. Its subcellular location is the nucleolus. Functionally, as part of the small subunit (SSU) processome, it plays a role in 40S-ribosomal-subunit biogenesis in the early pre-rRNA processing steps at sites A0, A1 and A2 that are required for proper maturation of the 18S RNA. Activates BMS1 by promoting GDP/GTP exchange. Does not have cyclase activity. The sequence is that of RNA 3'-terminal phosphate cyclase-like protein (Rcl1) from Mus musculus (Mouse).